Here is a 227-residue protein sequence, read N- to C-terminus: A-type potassium channel modulatory protein KCNIP1 (227 aa).

One can recognise an EF-hand 1; degenerate domain in the interval 38-94 (LEMTMVCHRPEGLEQLEAQTNFTKRELQVLYRGFKNECPSGVVNEETFKQIYAQFFP). EF-hand domains are found at residues 97 to 132 (DAST…LLRG), 133 to 168 (TVHE…IYDM), and 181 to 216 (TPRQ…DDNI). Ca(2+)-binding residues include D146, N148, D150, Y152, E157, D194, N196, D198, and E205. The interaction with KCND2 stretch occupies residues 214-227 (DNIMRSLQLFQNVM).

It belongs to the recoverin family. In terms of assembly, component of heteromultimeric potassium channels. Identified in potassium channel complexes containing KCND1, KCND2, KCND3, KCNIP1, KCNIP2, KCNIP3, KCNIP4, DPP6 and DPP10. Part of a heterooctamer composed of the tetrameric channel and four KCNIP1 chains. Probably part of a complex consisting of KCNIP1, KCNIP2 isoform 3 and KCND2. Self-associates to form homodimers and homotetramers. Interacts with KCNIP2 isoform 3 in a calcium-dependent manner. Interacts with KCND2; this interaction mediates the capture of both the N- and C-terminus of KCND2, thus preventing KCND2 N-type inactivation and modulates the channel gating kinetics. Interacts with KCND3; each KCNIP1 monomer interacts with two adjacent KCND3 subunits, through both the N-terminal inactivation ball of a KCND3 subunit and a C-terminal helix from the adjacent KCND3 subunit, clamping them together; this interaction stabilizes the tetrameric form and modulates the channel gating kinetics namely channel activation and inactivation kinetics and rate of recovery from inactivation. In terms of tissue distribution, expressed in brain. Found in a subpopulation of neurons widely distributed and enriched in Purkinje cells of the cerebellum and in the reticular thalamic and medial habenular nuclei.

The protein localises to the cell membrane. Its subcellular location is the cytoplasm. It is found in the cell projection. It localises to the dendrite. Its function is as follows. Regulatory subunit of Kv4/D (Shal)-type voltage-gated rapidly inactivating A-type potassium channels. Regulates channel density, inactivation kinetics and rate of recovery from inactivation in a calcium-dependent and isoform-specific manner. Modulates KCND2/Kv4.2 currents. In vitro, modulates KCND1/Kv4.1 currents. Increases the presence of KCND2 at the cell surface. The chain is A-type potassium channel modulatory protein KCNIP1 from Mus musculus (Mouse).